Reading from the N-terminus, the 354-residue chain is Tryptophan--tRNA ligase (354 aa).

ATP-binding positions include 13-15 and 21-22; these read QPT and GN. Residues 14–22 carry the 'HIGH' region motif; the sequence is PTGNLHLGN. D137 serves as a coordination point for L-tryptophan. Residues 149 to 151, V208, and 217 to 221 each bind ATP; these read GDD and KMSKS. The 'KMSKS' region motif lies at 217-221; the sequence is KMSKS.

Belongs to the class-I aminoacyl-tRNA synthetase family. As to quaternary structure, homodimer.

It is found in the cytoplasm. The enzyme catalyses tRNA(Trp) + L-tryptophan + ATP = L-tryptophyl-tRNA(Trp) + AMP + diphosphate + H(+). Catalyzes the attachment of tryptophan to tRNA(Trp). This Rhizobium meliloti (strain 1021) (Ensifer meliloti) protein is Tryptophan--tRNA ligase.